Consider the following 1121-residue polypeptide: Ataxin-2 homolog (1121 aa).

Residues 1–10 show a composition bias toward basic residues; it reads MNNNSKRKTR. A disordered region spans residues 1-53; that stretch reads MNNNSKRKTRPSGGGGGGGASGGISRYNANDNSLRPANNKSGAAGNSAGAGAG. Gly residues predominate over residues 12-22; that stretch reads SGGGGGGGASG. The segment covering 27 to 36 has biased composition (polar residues); it reads YNANDNSLRP. Over residues 37 to 47 the composition is skewed to low complexity; it reads ANNKSGAAGNS. Positions 71–146 constitute a Sm domain; it reads FFMHSATALV…VVKIVAKDFD (76 aa). Residues Ser219 and Ser232 each carry the phosphoserine modification. Disordered regions lie at residues 270–376, 422–458, 476–935, and 1039–1076; these read FAAV…GQGG, GKVMRGNVPPNSSGGGNISAVQGGNGNPVGQSKGGYQ, MHGS…TTGT, and QTPQSTTPSPGQPHQPFHPPPQPSPAGGGPQPAYTPPT. The span at 274-310 shows a compositional bias: basic and acidic residues; that stretch reads ERPEQDHRRDGDRERERNDRDREREERDRDRDRDRGN. Positions 323–347 are enriched in polar residues; that stretch reads ETMSSDRYITKQTRGPQMSHVSMSS. Composition is skewed to gly residues over residues 367–376 and 434–448; these read ISGGGAGQGG and SGGGNISAVQGGNGN. Composition is skewed to polar residues over residues 476–487 and 499–524; these read MHGSSQYRNPSH and ANANTNKPLPQRQIRQYQGSQSNSLN. 4 stretches are compositionally biased toward low complexity: residues 552 to 596, 623 to 684, 697 to 711, and 720 to 773; these read PPLQ…PQRQ, PPQQ…MQHQ, QPHYVPQPQQQQPQP, and QQQQ…APEP. A compositionally biased stretch (pro residues) spans 774–789; sequence SQQPLPLYHPMPPPQT. Low complexity-rich tracts occupy residues 807–825 and 835–890; these read ILTAQQPPQQQQLAATPKP and TTTP…STPV. 2 stretches are compositionally biased toward pro residues: residues 914–926 and 1048–1062; these read PSRPHTPQTPVPM and PGQPHQPFHPPPQPS.

It belongs to the ataxin-2 family.

It localises to the cytoplasm. Regulator of actin filament formation, though it does not directly assemble with actin filaments. Required for oocyte specification and oocyte positioning in the female germline. Also required for normal eye development and bristle morphology. In Drosophila pseudoobscura pseudoobscura (Fruit fly), this protein is Ataxin-2 homolog.